The primary structure comprises 187 residues: MSQSKPDTGNEIETQKQELIAALKACGAVRYGDFTLSSGKKSKYYIDIKKASTDPKTLKIIARQAALRVKEMGVGTVAGVELGGVPLATAVSLETGLPLLIVRKSVKEYGTKSRFVGDLRPEDRLVMLEDVTTSGGSVRDAIKVVRETGACVKYVITVVDREEGAKEKLKEADAELVPLVTASDLLK.

5-phospho-alpha-D-ribose 1-diphosphate contacts are provided by residues arginine 103, lysine 104, lysine 107, and 129–137 (EDVTTSGGS). 2 residues coordinate orotate: threonine 133 and arginine 161.

This sequence belongs to the purine/pyrimidine phosphoribosyltransferase family. PyrE subfamily. In terms of assembly, homodimer. Mg(2+) is required as a cofactor.

It catalyses the reaction orotidine 5'-phosphate + diphosphate = orotate + 5-phospho-alpha-D-ribose 1-diphosphate. The protein operates within pyrimidine metabolism; UMP biosynthesis via de novo pathway; UMP from orotate: step 1/2. Functionally, catalyzes the transfer of a ribosyl phosphate group from 5-phosphoribose 1-diphosphate to orotate, leading to the formation of orotidine monophosphate (OMP). The sequence is that of Orotate phosphoribosyltransferase from Methanosarcina acetivorans (strain ATCC 35395 / DSM 2834 / JCM 12185 / C2A).